The chain runs to 272 residues: Soluble interferon gamma receptor OPG193 (272 aa).

The signal sequence occupies residues 1–13; sequence MRYIIILAVLFIN. N-linked (GlcNAc...) asparagine; by host glycans are attached at residues N42, N150, and N267.

The protein belongs to the type II cytokine receptor family. As to quaternary structure, homodimer. Interacts with host IFNG.

It localises to the secreted. Its function is as follows. Counteracts the antiviral effects of host IFN-gamma. Acts as a soluble IFN-gamma receptor and thus inhibits the interaction between host IFN-gamma and its receptor. The polypeptide is Soluble interferon gamma receptor OPG193 (OPG193) (Bos taurus (Bovine)).